Reading from the N-terminus, the 1110-residue chain is MTACTFLAGGLRDPGLCGPTRWAPSPPGLPPIPPRPRLRLRPPLLLLLLLPRSVLSAVFTVGVLGPWACDPIFARARPDLAARLAASRLNHAAALEGGPRFEVALLPEPCRTPGSLGAVSSALTRVSGLVGPVNPAACRPAELLAQEAGVALVPWGCPGTRAAGTTAPVVTPAADALYALLRAFRWAHVALVTAPQDLWVEAGHALSTALRARGLPVALVTSMEPSDLSGAREALRRVQDGPRVRAVIMVMHSVLLGGEEQRCLLEAAEELGLADGSLVFLPFDTLHYALSPGPDALAVLANSSQLRKAHDAVLTLTRHCPLGGSVRDSLRRAQEHRELPLDLNLQQVSPLFGTIYDSVFLLAGGVARARVAAGGGWVSGAAVARHIRDARVPGFCGALGGAEEPSFVLLDTDATGDQLFATYVLDPTQGFFHSAGTPVHFPKGGRGPGPDPSCWFDPDTICNGGVEPSVVFIGFLLVVGMGLAGAFLAHYCRHRLLHIQMVSGPNKIILTLDDITFLHPHGGNSRKVAQGSRTSLAARSISDVRSIHSQLPDYTNIGLYEGDWVWLKKFPGDRHIAIRPATKMAFSKIRELRHENVALYLGLFLAGGAGGPAAPGEGVLAVVSEHCARGSLQDLLAQRDIKLDWMFKSSLLLDLIKGIRYLHHRGVAHGRLKSRNCVVDGRFVLKVTDHGHGRLLEAQRVLPEPPSAEDQLWTAPELLRDPVLERRGTLAGDVFSLGIIMQEVVCRSAPYAMLELTPEEVVKRVQSPPPLCRPSVSIDQAPMECIQLMKQCWAEQPELRPSMDRTFELFKSINKGRKMNIIDSMLRMLEQYSSNLEDLIRERTEELELEKQKTDRLLTQMLPPSVAEALKMGTPVEPEYFEEVTLYFSDIVGFTTISAMSEPIEVVDLLNDLYTLFDAIIGSHDVYKVETIGDAYMVASGLPQRNGHRHAAEIANMALDILSAVGTFRMRHMPEVPVRIRIGLHSGPCVAGVVGLTMPRYCLFGDTVNTASAMESTGLPYRIHVNRSTVQILSALNEGFLTEVRGRTELKGKGAEETYWLVGRRGFNKPIPKPPDLQPGASNHGISLHEIPPDRRQKLEKARPGQFSGK.

The first 56 residues, 1-56, serve as a signal peptide directing secretion; that stretch reads MTACTFLAGGLRDPGLCGPTRWAPSPPGLPPIPPRPRLRLRPPLLLLLLLPRSVLS. The Extracellular portion of the chain corresponds to 57–467; it reads AVFTVGVLGP…PDTICNGGVE (411 aa). N-linked (GlcNAc...) asparagine glycosylation occurs at asparagine 302. The helical transmembrane segment at 468 to 492 threads the bilayer; sequence PSVVFIGFLLVVGMGLAGAFLAHYC. In terms of domain architecture, Protein kinase spans 493–813; the sequence is RHRLLHIQMV…DRTFELFKSI (321 aa). Topologically, residues 493–1110 are cytoplasmic; that stretch reads RHRLLHIQMV…KARPGQFSGK (618 aa). The Guanylate cyclase domain maps to 885–1015; the sequence is TLYFSDIVGF…DTVNTASAME (131 aa). Positions 1070–1110 are disordered; the sequence is PIPKPPDLQPGASNHGISLHEIPPDRRQKLEKARPGQFSGK. A compositionally biased stretch (basic and acidic residues) spans 1091–1103; that stretch reads IPPDRRQKLEKAR.

It belongs to the adenylyl cyclase class-4/guanylyl cyclase family. Homodimer; requires homodimerization for guanylyl cyclase activity. Interacts (via C-terminus) with RD3 (via C-terminus); promotes the exit of GUCY2D from the endoplasmic reticulum and its trafficking to the photoreceptor outer segments. Interaction with RD3 negatively regulates GUCY2D guanylate cyclase activity. Expressed in the retina in rod outer segment.

The protein localises to the photoreceptor outer segment membrane. The protein resides in the endoplasmic reticulum membrane. The catalysed reaction is GTP = 3',5'-cyclic GMP + diphosphate. Activated by GUCA1A when free calcium ions concentration is low, and inhibited by GUCA1A when free calcium ions concentration is high. Negatively regulated by RD3; inhibits the basal and GUCA1A-stimulated guanylate cyclase activity. In terms of biological role, catalyzes the synthesis of cyclic GMP (cGMP) in rods and cones of photoreceptors. Plays an essential role in phototransduction, by mediating cGMP replenishment. May also participate in the trafficking of membrane-asociated proteins to the photoreceptor outer segment membrane. This Bos taurus (Bovine) protein is Retinal guanylyl cyclase 1 (GUCY2D).